The primary structure comprises 176 residues: Inorganic pyrophosphatase (176 aa).

Residues K30, R44, and Y56 each coordinate substrate. Mg(2+)-binding residues include D66, D71, and D103. Y142 contacts substrate.

It belongs to the PPase family. As to quaternary structure, homohexamer. The cofactor is Mg(2+).

Its subcellular location is the cytoplasm. The catalysed reaction is diphosphate + H2O = 2 phosphate + H(+). Its function is as follows. Catalyzes the hydrolysis of inorganic pyrophosphate (PPi) forming two phosphate ions. The protein is Inorganic pyrophosphatase of Escherichia coli O6:H1 (strain CFT073 / ATCC 700928 / UPEC).